We begin with the raw amino-acid sequence, 424 residues long: MEFKQGDRVRIEKNGTVYEGKVMPSMEGYITIKMNSGYNAGFSMDKVKITLLENNGENTNGGLNGGKEHKTAGEEVQKSGKKLPKVAILSTGGTIASKIDYRTGAVTSQFTADDILAAIPELREIADFKGRVISSILSENMDSESWQNLARAIVEEIEAGADGVIVTHGTDTMMYTAAALSFMIETPVPIVIVGSQRSADRPSSDNAMNAICAALVAISDIAEVSVVMHGTTSDDFCEIHRGTKVRKMHTSRRDAFKSINSRPIGIVDYNTRKIKTFIDYIKRGERPLKFNPGMEPKCALVKFTPGSGPEILDHYIDSGYRGLVLEGTGLGHVSTKWIPKIQKATDAKMPVIVTSQCLNGRICDRVYDTGRDMLKAGAIEGEDTLPEIALVKLMWVLGQTDEFNEAVKMLREDISGEITKCCFK.

Residues 58–79 (NTNGGLNGGKEHKTAGEEVQKS) form a disordered region. Residues 66-78 (GKEHKTAGEEVQK) are compositionally biased toward basic and acidic residues. One can recognise an Asparaginase/glutaminase domain in the interval 84-406 (PKVAILSTGG…LGQTDEFNEA (323 aa)). Active-site residues include threonine 94, threonine 170, aspartate 171, and lysine 247.

The protein belongs to the asparaginase 1 family. GatD subfamily. As to quaternary structure, heterodimer of GatD and GatE.

It carries out the reaction L-glutamyl-tRNA(Gln) + L-glutamine + ATP + H2O = L-glutaminyl-tRNA(Gln) + L-glutamate + ADP + phosphate + H(+). Functionally, allows the formation of correctly charged Gln-tRNA(Gln) through the transamidation of misacylated Glu-tRNA(Gln) in organisms which lack glutaminyl-tRNA synthetase. The reaction takes place in the presence of glutamine and ATP through an activated gamma-phospho-Glu-tRNA(Gln). The GatDE system is specific for glutamate and does not act on aspartate. The protein is Glutamyl-tRNA(Gln) amidotransferase subunit D of Methanosarcina barkeri (strain Fusaro / DSM 804).